The primary structure comprises 243 residues: Protein-L-isoaspartate O-methyltransferase (243 aa).

The active site involves Ser87.

The protein belongs to the methyltransferase superfamily. L-isoaspartyl/D-aspartyl protein methyltransferase family.

The protein resides in the cytoplasm. It carries out the reaction [protein]-L-isoaspartate + S-adenosyl-L-methionine = [protein]-L-isoaspartate alpha-methyl ester + S-adenosyl-L-homocysteine. Functionally, catalyzes the methyl esterification of L-isoaspartyl residues in peptides and proteins that result from spontaneous decomposition of normal L-aspartyl and L-asparaginyl residues. It plays a role in the repair and/or degradation of damaged proteins. In Methanosarcina mazei (strain ATCC BAA-159 / DSM 3647 / Goe1 / Go1 / JCM 11833 / OCM 88) (Methanosarcina frisia), this protein is Protein-L-isoaspartate O-methyltransferase.